Here is a 477-residue protein sequence, read N- to C-terminus: Ankyrin repeat, SAM and basic leucine zipper domain-containing protein 1 (477 aa).

Residues 1–24 (MATSALRGLAVAGGGESSESEDDG) are disordered. Residues Ser17, Ser18, and Ser20 each carry the phosphoserine modification. ANK repeat units follow at residues 46–76 (EKKEKFKKALTTGDVSLVQELLDSGIISVDA), 80–109 (YGWTPLMYAASVANAELVRVLLDRGANASF), 112–146 (DKQTILITACSAHGSEEQILKCVELLLSRNADPNV), 150–179 (RLMTPIMYAARDGHTQVVALLVASGAEVNT), 183–212 (NGYTALTWAARQGHKSIVLKLLELGANKML), and 216–245 (DGKLPSEIAKRNKHHEIFNLLSFTLNPLEG). One can recognise an SAM domain in the interval 274–336 (SYAEFGDLEV…KILAALKELE (63 aa)).

In terms of assembly, interacts with DDX4, PIWIL1, RANBP9 and TDRD1.

The protein localises to the cytoplasm. In terms of biological role, plays a central role during spermatogenesis by repressing transposable elements and preventing their mobilization, which is essential for the germline integrity. Acts via the piRNA metabolic process, which mediates the repression of transposable elements during meiosis by forming complexes composed of piRNAs and Piwi proteins and governs the methylation and subsequent repression of transposons. Its association with pi-bodies suggests a participation in the primary piRNAs metabolic process. Required prior to the pachytene stage to facilitate the production of multiple types of piRNAs, including those associated with repeats involved in the regulation of retrotransposons. May act by mediating protein-protein interactions during germ cell maturation. This chain is Ankyrin repeat, SAM and basic leucine zipper domain-containing protein 1 (ASZ1), found in Saimiri boliviensis boliviensis (Bolivian squirrel monkey).